The sequence spans 229 residues: Pdp3-interacting factor 1 (229 aa).

Aspartate 12 serves as the catalytic Nucleophile. Mg(2+) is bound by residues aspartate 12, aspartate 14, and aspartate 176. The active-site Proton donor is aspartate 14.

It belongs to the HAD-like hydrolase superfamily. In terms of assembly, component of the mst2 complex composed of at least eaf6, mst2, nto1, pdp3, ptf1, ptf2 and tfg3. The cofactor is Mg(2+).

Its subcellular location is the cytoplasm. The protein localises to the nucleus. It carries out the reaction D-ribitol 5-phosphate + H2O = ribitol + phosphate. The enzyme catalyses D-sorbitol 6-phosphate + H2O = D-sorbitol + phosphate. The catalysed reaction is sn-glycerol 1-phosphate + H2O = glycerol + phosphate. It catalyses the reaction D-erythrose 4-phosphate + H2O = D-erythrose + phosphate. Component of the mst2 complex which is a highly specific H3 lysine 14 (H3K14) acetyltransferase that functions together with gcn5 to regulate global levels of H3K14 acetylation (H3K14ac), critical for DNA damage checkpoint activation. In terms of biological role, may also function as a sugar alcohol (polyol) phosphatase that prevents accumulation of toxic levels of polyol phosphates, which can impair glycolysis by inhibiting glucose-6-phosphate isomerase. This is Pdp3-interacting factor 1 from Schizosaccharomyces pombe (strain 972 / ATCC 24843) (Fission yeast).